The following is a 393-amino-acid chain: uncharacterized protein (393 aa).

67-74 (GPDGMGKS) is a binding site for ATP.

This is an uncharacterized protein from Mycobacterium tuberculosis (strain CDC 1551 / Oshkosh).